We begin with the raw amino-acid sequence, 250 residues long: Acetylglutamate kinase (250 aa).

Residues Gly-41–Gly-42, Arg-63, and Asn-156 each bind substrate.

This sequence belongs to the acetylglutamate kinase family. ArgB subfamily.

The protein localises to the cytoplasm. It carries out the reaction N-acetyl-L-glutamate + ATP = N-acetyl-L-glutamyl 5-phosphate + ADP. The protein operates within amino-acid biosynthesis; L-arginine biosynthesis; N(2)-acetyl-L-ornithine from L-glutamate: step 2/4. Its function is as follows. Catalyzes the ATP-dependent phosphorylation of N-acetyl-L-glutamate. The protein is Acetylglutamate kinase of Listeria monocytogenes serotype 4b (strain F2365).